The primary structure comprises 1954 residues: Protein GREB1 (1954 aa).

3 disordered regions span residues 48–83 (LSSL…QLPP), 238–342 (LAAF…AKHE), and 1083–1235 (KGPK…GSSS). Acidic residues predominate over residues 59–68 (NEEEEEDGEG). The segment covering 292–303 (SSLSALPRPSAL) has biased composition (low complexity). Basic and acidic residues-rich tracts occupy residues 1083-1099 (KGPK…KLSS) and 1122-1133 (GPVKRERSHSHD). Residues 1134-1146 (SASSSLSSRASGS) show a composition bias toward low complexity. Positions 1187–1196 (RVSQGSTVIS) are enriched in polar residues. The segment covering 1224–1235 (SSQLSSSSGSSS) has biased composition (low complexity). Residues 1873–1893 (DMVFSGLLLYLCDSFVGASFL) form a helical membrane-spanning segment.

This sequence belongs to the GREB1 family.

Its subcellular location is the membrane. Its function is as follows. May play a role in estrogen-stimulated cell proliferation. This Mus musculus (Mouse) protein is Protein GREB1 (Greb1).